A 163-amino-acid chain; its full sequence is Lipoprotein signal peptidase (163 aa).

A run of 3 helical transmembrane segments spans residues 4–24 (SAAL…LLIL), 66–86 (LDAW…AWLW), and 92–112 (DHQF…GNII). Active-site residues include aspartate 122 and aspartate 140. The chain crosses the membrane as a helical span at residues 132–152 (SFAVFNLADSLITIGAGFILL).

The protein belongs to the peptidase A8 family.

Its subcellular location is the cell inner membrane. The catalysed reaction is Release of signal peptides from bacterial membrane prolipoproteins. Hydrolyzes -Xaa-Yaa-Zaa-|-(S,diacylglyceryl)Cys-, in which Xaa is hydrophobic (preferably Leu), and Yaa (Ala or Ser) and Zaa (Gly or Ala) have small, neutral side chains.. Its pathway is protein modification; lipoprotein biosynthesis (signal peptide cleavage). Functionally, this protein specifically catalyzes the removal of signal peptides from prolipoproteins. In Allorhizobium ampelinum (strain ATCC BAA-846 / DSM 112012 / S4) (Agrobacterium vitis (strain S4)), this protein is Lipoprotein signal peptidase.